We begin with the raw amino-acid sequence, 471 residues long: Cysteine--tRNA ligase (471 aa).

Cys-29 provides a ligand contact to Zn(2+). The 'HIGH' region signature appears at 31 to 41 (PTVYDYFHIGN). Positions 212, 237, and 241 each coordinate Zn(2+). The short motif at 269–273 (KMSKS) is the 'KMSKS' region element. An ATP-binding site is contributed by Lys-272.

Belongs to the class-I aminoacyl-tRNA synthetase family. As to quaternary structure, monomer. The cofactor is Zn(2+).

The protein resides in the cytoplasm. It carries out the reaction tRNA(Cys) + L-cysteine + ATP = L-cysteinyl-tRNA(Cys) + AMP + diphosphate. This is Cysteine--tRNA ligase from Symbiobacterium thermophilum (strain DSM 24528 / JCM 14929 / IAM 14863 / T).